A 167-amino-acid polypeptide reads, in one-letter code: SsrA-binding protein (167 aa).

Belongs to the SmpB family.

The protein resides in the cytoplasm. In terms of biological role, required for rescue of stalled ribosomes mediated by trans-translation. Binds to transfer-messenger RNA (tmRNA), required for stable association of tmRNA with ribosomes. tmRNA and SmpB together mimic tRNA shape, replacing the anticodon stem-loop with SmpB. tmRNA is encoded by the ssrA gene; the 2 termini fold to resemble tRNA(Ala) and it encodes a 'tag peptide', a short internal open reading frame. During trans-translation Ala-aminoacylated tmRNA acts like a tRNA, entering the A-site of stalled ribosomes, displacing the stalled mRNA. The ribosome then switches to translate the ORF on the tmRNA; the nascent peptide is terminated with the 'tag peptide' encoded by the tmRNA and targeted for degradation. The ribosome is freed to recommence translation, which seems to be the essential function of trans-translation. The protein is SsrA-binding protein of Stenotrophomonas maltophilia (strain R551-3).